The following is a 286-amino-acid chain: Aquaporin PIP1-3 (286 aa).

N-acetylmethionine is present on methionine 1. Positions 1-33 (MEGKEEDVRVGANKFPERQPIGTSAQTDKDYKE) are disordered. At 1–54 (MEGKEEDVRVGANKFPERQPIGTSAQTDKDYKEPPPAPFFEPGELSSWSFYRAG) the chain is on the cytoplasmic side. A helical transmembrane segment spans residues 55-75 (IAEFIATFLFLYITVLTVMGV). Topologically, residues 76-81 (KRAPNM) are extracellular. Residues 82 to 102 (CASVGIQGIAWAFGGMIFALV) traverse the membrane as a helical segment. Residues 103–132 (YCTAGISGGHINPAVTFGLFLARKLSLTRA) are Cytoplasmic-facing. The NPA 1 motif lies at 114–116 (NPA). Residues 133-153 (VFYIVMQCLGAICGAGVVKGF) traverse the membrane as a helical segment. At 154–174 (QPNPYQTLGGGANTVAHGYTK) the chain is on the extracellular side. The chain crosses the membrane as a helical span at residues 175–195 (GSGLGAEIIGTFVLVYTVFSA). The Cytoplasmic segment spans residues 196–208 (TDAKRSARDSHVP). The helical transmembrane segment at 209-229 (ILAPLPIGFAVFLVHLATIPI) threads the bilayer. Residues 230–256 (TGTGINPARSLGAAIIYNKDHAWDDHW) are Extracellular-facing. The short motif at 235 to 237 (NPA) is the NPA 2 element. Residues 257–277 (IFWVGPFIGAALAALYHQLVI) traverse the membrane as a helical segment. The Cytoplasmic segment spans residues 278–286 (RAIPFKSRS). Serine 284 is modified (phosphoserine).

This sequence belongs to the MIP/aquaporin (TC 1.A.8) family. PIP (TC 1.A.8.11) subfamily. Expressed in roots, above ground, ripening fruit, flower buds, green siliques and senescing leaves.

The protein resides in the cell membrane. Functionally, water channel required to facilitate the transport of water across cell membrane. Its function is impaired by Hg(2+). The protein is Aquaporin PIP1-3 (PIP1-3) of Arabidopsis thaliana (Mouse-ear cress).